Reading from the N-terminus, the 160-residue chain is Bacterial microcompartment shell protein PduK (160 aa).

Residues serine 11 to threonine 96 enclose the BMC domain.

This sequence belongs to the bacterial microcompartments protein family. In terms of assembly, interacts with shell proteins PduA and PduP and assembly protein PduM. Fe cation serves as cofactor.

It localises to the bacterial microcompartment. The protein operates within polyol metabolism; 1,2-propanediol degradation. A minor shell protein of the bacterial microcompartment (BMC) dedicated to 1,2-propanediol (1,2-PD) degradation. The isolated BMC shell component protein ratio for J:A:B':B:K:T:U is approximately 15:10:7:6:1:1:2. Not required for structural integrity of BMCs nor to mitigate propionaldehyde toxicity, it might be involved in spatial organization of BMCs. In terms of biological role, the 1,2-PD-specific bacterial microcompartment (BMC) concentrates low levels of 1,2-PD catabolic enzymes, concentrates volatile reaction intermediates thus enhancing pathway flux and keeps the level of toxic, mutagenic propionaldehyde low. The protein is Bacterial microcompartment shell protein PduK of Salmonella typhimurium (strain LT2 / SGSC1412 / ATCC 700720).